Consider the following 574-residue polypeptide: K(+)/H(+) antiporter NhaP2 (574 aa).

Transmembrane regions (helical) follow at residues 6–26, 34–54, 58–78, 87–107, 109–129, 173–193, 196–216, 219–239, 242–262, 271–291, 299–319, 335–355, and 359–379; these read INSFFLIGALLAAVSVLLSPV, ILLIFLAVGILAGEDGPGGIL, YSTAYLVSNLALAIILLDGGM, VALWPALSLATFGVAITTSIT, VMAAWLFDLHWLQGLLVGAIV, IAILANVDAELSVSFMLISFI, FGLGIFLGLGGGWLLWKLVNL, LAEGLYSILVLSGGLMIYAAS, LGGSGILSIYLVGLFLGNKPT, VLDGMTWVSQIGMFLVLGLLL, IWLPGLALAFGMILFARPLAV, WFISWVGLRGAVPIILAVFPM, and LPGAQLYFNLAFFVVLVSLLV. Residues 405–486 form the RCK C-terminal domain; sequence SGVEIYPSSE…LEALSNLFSQ (82 aa).

Belongs to the monovalent cation:proton antiporter 1 (CPA1) transporter (TC 2.A.36) family. NhaP2 subfamily.

The protein localises to the cell inner membrane. It carries out the reaction K(+)(in) + H(+)(out) = K(+)(out) + H(+)(in). K(+)/H(+) antiporter that extrudes potassium in exchange for external protons and maintains the internal concentration of potassium under toxic levels. The chain is K(+)/H(+) antiporter NhaP2 from Shewanella sp. (strain ANA-3).